The sequence spans 449 residues: Alpha-L-fucosidase (449 aa).

Positions 1-19 (MGLLLLLSLLSACFQPRYA) are cleaved as a signal peptide. N-linked (GlcNAc...) asparagine glycans are attached at residues N156, N224, N362, and N375.

Belongs to the glycosyl hydrolase 29 family. Homotetramer.

The protein resides in the secreted. The enzyme catalyses an alpha-L-fucoside + H2O = L-fucose + an alcohol. Its function is as follows. Alpha-L-fucosidase is responsible for hydrolyzing the alpha-1,6-linked fucose joined to the reducing-end N-acetylglucosamine of the carbohydrate moieties of glycoproteins. The chain is Alpha-L-fucosidase from Branchiostoma floridae (Florida lancelet).